The primary structure comprises 203 residues: AFG2-interacting ribosome maturation factor (203 aa).

Part of the 55LCC heterohexameric ATPase complex composed at least of AIRIM, AFG2A, AFG2B and CINP. Does not associate with pre-60S ribosomal particles. Phosphorylated on serines by CK2 kinase.

It is found in the nucleus. Its subcellular location is the cytoplasm. Functionally, part of the 55LCC heterohexameric ATPase complex which is chromatin-associated and promotes replisome proteostasis to maintain replication fork progression and genome stability. Required for replication fork progression, sister chromatid cohesion, and chromosome stability. The ATPase activity is specifically enhanced by replication fork DNA and is coupled to cysteine protease-dependent cleavage of replisome substrates in response to replication fork damage. Uses ATPase activity to process replisome substrates in S-phase, facilitating their proteolytic turnover from chromatin to ensure DNA replication and mitotic fidelity. Involved in the cytoplasmic maturation steps of pre-60S ribosomal particles by promoting the release of shuttling protein RSL24D1/RLP24 from the pre-ribosomal particles. The protein is AFG2-interacting ribosome maturation factor of Homo sapiens (Human).